A 232-amino-acid polypeptide reads, in one-letter code: Methylthioribulose-1-phosphate dehydratase (232 aa).

A substrate-binding site is contributed by Cys91. Positions 109, 111, and 191 each coordinate Zn(2+).

This sequence belongs to the aldolase class II family. MtnB subfamily. It depends on Zn(2+) as a cofactor.

Its subcellular location is the cytoplasm. The catalysed reaction is 5-(methylsulfanyl)-D-ribulose 1-phosphate = 5-methylsulfanyl-2,3-dioxopentyl phosphate + H2O. It functions in the pathway amino-acid biosynthesis; L-methionine biosynthesis via salvage pathway; L-methionine from S-methyl-5-thio-alpha-D-ribose 1-phosphate: step 2/6. Its function is as follows. Catalyzes the dehydration of methylthioribulose-1-phosphate (MTRu-1-P) into 2,3-diketo-5-methylthiopentyl-1-phosphate (DK-MTP-1-P). This chain is Methylthioribulose-1-phosphate dehydratase, found in Schizosaccharomyces japonicus (strain yFS275 / FY16936) (Fission yeast).